Consider the following 553-residue polypeptide: Putative transport protein PM1071 (553 aa).

5 helical membrane passes run 4-24, 28-48, 65-85, 91-111, and 157-177; these read IAIT…IGHW, GVGL…HFTN, FGLI…FFAS, LKLN…VIVI, and MAYA…MWLI. RCK C-terminal domains lie at 190 to 276 and 277 to 361; these read KNFL…VLGE and EVDV…ILGN. Helical transmembrane passes span 371 to 391, 403 to 425, 439 to 459, 464 to 484, 496 to 516, and 533 to 553; these read MLPV…PFHI, AGGP…LYWF, IVLF…DTLV, LEWM…VGIV, LCGL…ANAI, and LVMF…WTLL.

The protein belongs to the AAE transporter (TC 2.A.81) family. YidE subfamily.

It is found in the cell membrane. The sequence is that of Putative transport protein PM1071 from Pasteurella multocida (strain Pm70).